A 267-amino-acid polypeptide reads, in one-letter code: Undecaprenyl-diphosphatase (267 aa).

7 helical membrane passes run 1–21 (MTLW…FLPI), 39–59 (AGVA…LFYY), 85–105 (AKLG…GFMV), 117–137 (LLIA…DFWG), 189–209 (FSFL…LWKL), 220–240 (LIAL…ALFI), and 246–266 (VGMM…FFVF).

This sequence belongs to the UppP family.

Its subcellular location is the cell inner membrane. The enzyme catalyses di-trans,octa-cis-undecaprenyl diphosphate + H2O = di-trans,octa-cis-undecaprenyl phosphate + phosphate + H(+). Catalyzes the dephosphorylation of undecaprenyl diphosphate (UPP). Confers resistance to bacitracin. In Dichelobacter nodosus (strain VCS1703A), this protein is Undecaprenyl-diphosphatase.